Here is a 923-residue protein sequence, read N- to C-terminus: Protocadherin gamma-B4 (923 aa).

The first 30 residues, 1-30, serve as a signal peptide directing secretion; the sequence is MGSGAGELGRAERLPVLFLFLLSLFCPALC. 6 consecutive Cadherin domains span residues 31-133, 134-242, 243-345, 346-450, 451-560, and 568-673; these read EQIR…TPKF, TQNS…APVF, SQDI…APEV, IFQS…APVF, SQSS…APRV, and DGSA…LPDI. The Extracellular portion of the chain corresponds to 31–689; that stretch reads EQIRYRIPEE…SDLEAELQFY (659 aa). Asparagine 417 and asparagine 543 each carry an N-linked (GlcNAc...) asparagine glycan. The chain crosses the membrane as a helical span at residues 690 to 710; the sequence is LVVALALISVLFLVAMILAIA. Residues 711-923 lie on the Cytoplasmic side of the membrane; it reads LRLRRSSSPA…KKKSGKKEKK (213 aa). Disordered stretches follow at residues 797–832 and 893–923; these read SHQQ…WPNN and ATLT…KEKK. Over residues 913-923 the composition is skewed to basic residues; that stretch reads NKKKSGKKEKK.

It localises to the cell membrane. Functionally, potential calcium-dependent cell-adhesion protein. May be involved in the establishment and maintenance of specific neuronal connections in the brain. The polypeptide is Protocadherin gamma-B4 (PCDHGB4) (Pan troglodytes (Chimpanzee)).